Reading from the N-terminus, the 199-residue chain is Small ribosomal subunit protein uS4 (199 aa).

Positions 106-170 (RRLQTIVFRK…SPVANELHPI (65 aa)) constitute an S4 RNA-binding domain. Positions 177–199 (PAQRSAEMKEGQGEASEEGETDE) are disordered.

Belongs to the universal ribosomal protein uS4 family. In terms of assembly, part of the 30S ribosomal subunit. Contacts protein S5. The interaction surface between S4 and S5 is involved in control of translational fidelity.

Its function is as follows. One of the primary rRNA binding proteins, it binds directly to 16S rRNA where it nucleates assembly of the body of the 30S subunit. In terms of biological role, with S5 and S12 plays an important role in translational accuracy. This Thermoplasma acidophilum (strain ATCC 25905 / DSM 1728 / JCM 9062 / NBRC 15155 / AMRC-C165) protein is Small ribosomal subunit protein uS4.